A 775-amino-acid polypeptide reads, in one-letter code: MASAGHIITLLLWGYLLELWTGGHTADTTHPRLRLSHKELLNLNRTSIFHSPFGFLDLHTMLLDEYQERLFVGGRDLVYSLSLERISDGYKEIHWPSTALKMEECIMKGKDAGECANYVRVLHHYNRTHLLTCGTGAFDPVCAFIRVGYHLEDPLFHLESPRSERGRGRCPFDPSSSFISTLIGSELFAGLYSDYWSRDAAIFRSMGRLAHIRTEHDDERLLKEPKFVGSYMIPDNEDRDDNKVYFFFTEKALEAENNAHAIYTRVGRLCVNDVGGQRILVNKWSTFLKARLVCSVPGMNGIDTYFDELEDVFLLPTRDHKNPVIFGLFNTTSNIFRGHAICVYHMSSIRAAFNGPYAHKEGPEYHWSVYEGKVPYPRPGSCASKVNGGRYGTTKDYPDDAIRFARSHPLMYQAIKPAHKKPILVKTDGKYNLKQIAVDRVEAEDGQYDVLFIGTDNGIVLKVITIYNQEMESMEEVILEELQIFKDPVPIISMEISSKRQQLYIGSASAVAQVRFHHCDMYGSACADCCLARDPYCAWDGISCSRYYPTGTHAKRRFRRQDVRHGNAAQQCFGQQFVGDALDKTEEHLAYGIENNSTLLECTPRSLQAKVIWFVQKGRETRKEEVKTDDRVVKMDLGLLFLRLHKSDAGTYFCQTVEHSFVHTVRKITLEVVEEEKVEDMFNKDDEEDRHHRMPCPAQSSISQGAKPWYKEFLQLIGYSNFQRVEEYCEKVWCTDRKRKKLKMSPSKWKYANPQEKKLRSKPEHYRLPRHTLDS.

The first 25 residues, 1 to 25, serve as a signal peptide directing secretion; it reads MASAGHIITLLLWGYLLELWTGGHT. One can recognise a Sema domain in the interval 32-516; sequence RLRLSHKELL…SASAVAQVRF (485 aa). Asparagine 44 carries an N-linked (GlcNAc...) asparagine glycan. Residues cysteine 105 and cysteine 115 are joined by a disulfide bond. Residue asparagine 126 is glycosylated (N-linked (GlcNAc...) asparagine). Intrachain disulfides connect cysteine 133/cysteine 142, cysteine 270/cysteine 382, cysteine 294/cysteine 342, and cysteine 519/cysteine 537. N-linked (GlcNAc...) asparagine glycosylation occurs at asparagine 330. In terms of domain architecture, Ig-like C2-type spans 581-669; sequence ALDKTEEHLA…SFVHTVRKIT (89 aa). Asparagine 595 and asparagine 596 each carry an N-linked (GlcNAc...) asparagine glycan. Cysteine 654 and cysteine 729 are oxidised to a cystine. A disordered region spans residues 742 to 775; the sequence is LKMSPSKWKYANPQEKKLRSKPEHYRLPRHTLDS. The segment covering 755–775 has biased composition (basic and acidic residues); that stretch reads QEKKLRSKPEHYRLPRHTLDS.

Belongs to the semaphorin family. In terms of assembly, interacts with PLXND1.

It localises to the secreted. Functionally, plays an important role in signaling via the cell surface receptor PLXND1. Mediates reorganization of the actin cytoskeleton, leading to the retraction of cell projections. Promotes focal adhesion disassembly and inhibits adhesion of endothelial cells to the extracellular matrix. Regulates angiogenesis, both during embryogenesis and after birth. Can down-regulate sprouting angiogenesis. Required for normal vascular patterning during embryogenesis. Plays an important role in ensuring the specificity of synapse formation. The polypeptide is Semaphorin-3E (SEMA3E) (Homo sapiens (Human)).